We begin with the raw amino-acid sequence, 369 residues long: Transposase for insertion sequence element IS1201 (369 aa).

The protein belongs to the transposase mutator family.

In terms of biological role, required for the transposition of the insertion element. The polypeptide is Transposase for insertion sequence element IS1201 (Lactobacillus helveticus (Lactobacillus suntoryeus)).